The sequence spans 252 residues: Indole-3-glycerol phosphate synthase (252 aa).

The protein belongs to the TrpC family.

It catalyses the reaction 1-(2-carboxyphenylamino)-1-deoxy-D-ribulose 5-phosphate + H(+) = (1S,2R)-1-C-(indol-3-yl)glycerol 3-phosphate + CO2 + H2O. It functions in the pathway amino-acid biosynthesis; L-tryptophan biosynthesis; L-tryptophan from chorismate: step 4/5. In Bacillus licheniformis (strain ATCC 14580 / DSM 13 / JCM 2505 / CCUG 7422 / NBRC 12200 / NCIMB 9375 / NCTC 10341 / NRRL NRS-1264 / Gibson 46), this protein is Indole-3-glycerol phosphate synthase.